Reading from the N-terminus, the 353-residue chain is MGCGMSTEEKEGKARNEEIENQLKRDRMQQRNEIKMLLLGAGESGKSTILKQMKLIHEGGYSRDERESFKEIIFSNTVQSMRVILEAMESLELPLEDQRMEYHVQTIFMQPAQIEGDVLPPEVGSAIEALWKDRGVQECFKRSREYQLNDSARYYFDNIARIAAPDYMPNDQDVLRSRVKTTGITETTFIIGDLTYRMFDVGGQRSERKKWIHCFENVTTILFLVAISEYDQLLFEDETVNRMQEALTLFDSICNSRWFIKTSIILFLNKIDRFKEKLPVSPMKNYFPDYEGGDDYAAACDYILNRFVSLNQHETKQIYTHFTCATDTTQIRFVMAAVNDIIIQENLRLCGLI.

Residues 1 to 26 form a disordered region; it reads MGCGMSTEEKEGKARNEEIENQLKRD. Glycine 2 is lipidated: N-myristoyl glycine. Cysteine 3 is lipidated: S-palmitoyl cysteine. Positions 7 to 26 are enriched in basic and acidic residues; it reads TEEKEGKARNEEIENQLKRD. One can recognise a G-alpha domain in the interval 32–353; that stretch reads NEIKMLLLGA…QENLRLCGLI (322 aa). Residues 35-48 are G1 motif; the sequence is KMLLLGAGESGKST. GTP is bound by residues glutamate 43, serine 44, glycine 45, lysine 46, serine 47, threonine 48, aspartate 150, leucine 175, threonine 181, glycine 203, asparagine 269, lysine 270, aspartate 272, and alanine 325. A Mg(2+)-binding site is contributed by serine 47. Residues 173–181 are G2 motif; it reads DVLRSRVKT. Residue threonine 181 participates in Mg(2+) binding. Positions 196–205 are G3 motif; that stretch reads YRMFDVGGQR. The interval 265 to 272 is G4 motif; it reads ILFLNKID. Residues 323 to 328 are G5 motif; sequence TCATDT.

It belongs to the G-alpha family. G(q) subfamily. As to quaternary structure, g proteins are composed of 3 units; alpha, beta and gamma. The alpha chain contains the guanine nucleotide binding site. Mg(2+) is required as a cofactor.

In terms of biological role, guanine nucleotide-binding proteins (G proteins) are involved as modulators or transducers in various transmembrane signaling systems. The sequence is that of Guanine nucleotide-binding protein subunit alpha from Cryphonectria parasitica (Chestnut blight fungus).